The sequence spans 110 residues: Iron-sulfur cluster assembly protein CyaY (110 aa).

Belongs to the frataxin family.

Involved in iron-sulfur (Fe-S) cluster assembly. May act as a regulator of Fe-S biogenesis. This is Iron-sulfur cluster assembly protein CyaY from Pseudomonas syringae pv. syringae (strain B728a).